The primary structure comprises 191 residues: Small ribosomal subunit protein uS5 (191 aa).

Residues 1-21 (MAAERERGGRERSREREERDS) are disordered. One can recognise an S5 DRBM domain in the interval 23-86 (FVDKLVHINR…ESAKRNLTRV (64 aa)).

Part of the 30S ribosomal subunit. Contacts proteins S4 and S8.

Its function is as follows. With S4 and S12 plays an important role in translational accuracy. In terms of biological role, located at the back of the 30S subunit body where it stabilizes the conformation of the head with respect to the body. This is Small ribosomal subunit protein uS5 from Rhodopseudomonas palustris (strain ATCC BAA-98 / CGA009).